We begin with the raw amino-acid sequence, 460 residues long: Argininosuccinate lyase (460 aa).

Belongs to the lyase 1 family. Argininosuccinate lyase subfamily.

The protein resides in the cytoplasm. The catalysed reaction is 2-(N(omega)-L-arginino)succinate = fumarate + L-arginine. The protein operates within amino-acid biosynthesis; L-arginine biosynthesis; L-arginine from L-ornithine and carbamoyl phosphate: step 3/3. The polypeptide is Argininosuccinate lyase (Streptococcus uberis (strain ATCC BAA-854 / 0140J)).